We begin with the raw amino-acid sequence, 366 residues long: tRNA-specific 2-thiouridylase MnmA (366 aa).

Residues 6-13 (AMSGGVDS) and Leu-32 contribute to the ATP site. Cys-101 acts as the Nucleophile in catalysis. An intrachain disulfide couples Cys-101 to Cys-199. Residue Gly-125 participates in ATP binding. An interaction with tRNA region spans residues 149–151 (KDQ). Catalysis depends on Cys-199, which acts as the Cysteine persulfide intermediate.

Belongs to the MnmA/TRMU family.

It is found in the cytoplasm. It catalyses the reaction S-sulfanyl-L-cysteinyl-[protein] + uridine(34) in tRNA + AH2 + ATP = 2-thiouridine(34) in tRNA + L-cysteinyl-[protein] + A + AMP + diphosphate + H(+). Its function is as follows. Catalyzes the 2-thiolation of uridine at the wobble position (U34) of tRNA, leading to the formation of s(2)U34. The protein is tRNA-specific 2-thiouridylase MnmA of Corynebacterium diphtheriae (strain ATCC 700971 / NCTC 13129 / Biotype gravis).